A 583-amino-acid chain; its full sequence is Glucosidase 2 subunit beta (583 aa).

Positions 1 to 26 are cleaved as a signal peptide; it reads MVRLNLAVVALAAGALSASASASSSA. Cysteine 91 and cysteine 115 are oxidised to a cystine. A coiled-coil region spans residues 130–252; the sequence is NRCEKVGKEY…LTLLLDDLAK (123 aa). The 108-residue stretch at 455 to 562 folds into the MRH domain; the sequence is NKCFSKDMGE…KVATPAVCFP (108 aa). 3 disulfides stabilise this stretch: cysteine 457/cysteine 470, cysteine 519/cysteine 548, and cysteine 533/cysteine 560. A Prevents secretion from ER motif is present at residues 580-583; it reads KDEL.

Heterodimer of a catalytic subunit alpha and a subunit beta.

It localises to the endoplasmic reticulum. Functionally, subunit of glucosidase 2, which cleaves sequentially the 2 innermost alpha-1,3-linked glucose residues from the Glc(2)Man(9)GlcNAc(2) oligosaccharide precursor of immature glycoproteins in the endoplasmic reticulum (ER). Specifically required for the cleavage of the final glucose. The subunit beta retains the catalytic subunit alpha in the ER. The protein is Glucosidase 2 subunit beta of Mycosarcoma maydis (Corn smut fungus).